A 435-amino-acid chain; its full sequence is Transmembrane protein 130 (435 aa).

The first 24 residues, 1-24, serve as a signal peptide directing secretion; that stretch reads MAQAVWSRLGRILWLACLLPWAPA. Over 25-339 the chain is Extracellular; the sequence is GVAAGLYELN…IQVWPSRIQP (315 aa). N-linked (GlcNAc...) asparagine glycans are attached at residues Asn34, Asn197, and Asn300. The region spanning 147–233 is the PKD domain; sequence WPSSYLTKTV…AVKQKTGDFS (87 aa). The helical transmembrane segment at 340–360 threads the bilayer; sequence AVFAFPCATLITVMLAFIMYM. The Cytoplasmic segment spans residues 361–435; that stretch reads TLRNATQQKD…LYKSVKTYTV (75 aa).

It localises to the golgi apparatus membrane. The chain is Transmembrane protein 130 (TMEM130) from Homo sapiens (Human).